Consider the following 369-residue polypeptide: Bi-functional coumaroyl CoA and feruloyl CoA ortho-hydroxylase Diox2 (369 aa).

The Fe2OG dioxygenase domain occupies 215–318; sequence GSRRVNLNYY…RISVPLFVNP (104 aa). Tyr224 is a 2-oxoglutarate binding site. Fe cation-binding residues include His239, Asp241, and His299. Arg309 and Ser311 together coordinate 2-oxoglutarate.

Belongs to the iron/ascorbate-dependent oxidoreductase family. L-ascorbate is required as a cofactor. The cofactor is Fe(2+).

The enzyme catalyses (E)-4-coumaroyl-CoA + 2-oxoglutarate + O2 = (E)-2,4-dihydroxycinnamoyl-CoA + succinate + CO2. It catalyses the reaction (E)-feruloyl-CoA + 2-oxoglutarate + O2 = (E)-6-hydroxyferuloyl-CoA + succinate + CO2. It participates in phenylpropanoid metabolism. Functionally, 2-oxoglutarate (OG)- and Fe(II)-dependent dioxygenase (2OGD) involved in scopoletin and umbelliferone biosynthesis. Converts feruloyl CoA into 6'-hydroxyferuloyl CoA, and p-coumaroyl CoA into 2,4-dihydroxycinnamoyl-CoA. This Ruta graveolens (Common rue) protein is Bi-functional coumaroyl CoA and feruloyl CoA ortho-hydroxylase Diox2.